Here is a 2628-residue protein sequence, read N- to C-terminus: Protein FMP27, mitochondrial (2628 aa).

An N-terminal signal peptide occupies residues 1 to 28; sequence MMFPINVLLYKWLIFAVTFLWSCKILLR. Positions 29–192 are transmembrane domain; sequence KLLGINITWI…NTNLLIGEIM (164 aa). 9 LRR repeats span residues 160-182, 213-236, 271-296, 306-333, 571-596, 835-857, 1944-1967, 2101-2125, and 2303-2327; these read FDSF…IFIV, PMNL…KLLQ, IKPL…NHPE, YNVL…IFEE, NADI…LVHN, VVSL…IFGH, FDSL…FFIF, FFML…IFLK, and IGKL…ILRK.

It is found in the cell membrane. It localises to the endoplasmic reticulum membrane. Its subcellular location is the mitochondrion membrane. Its function is as follows. Tube-forming lipid transport protein which binds to phosphatidylinositols and affects phosphatidylinositol-4,5-bisphosphate (PtdIns-4,5-P2) distribution. The chain is Protein FMP27, mitochondrial from Saccharomyces cerevisiae (strain ATCC 204508 / S288c) (Baker's yeast).